A 314-amino-acid polypeptide reads, in one-letter code: L-lactate dehydrogenase 2 (314 aa).

NAD(+) contacts are provided by residues valine 16, aspartate 37, lysine 42, tyrosine 68, and 82 to 83 (GV). 2 residues coordinate substrate: glutamine 85 and arginine 91. NAD(+) is bound by residues serine 104, 121–123 (ASN), and threonine 146. 123 to 126 (NPVD) is a binding site for substrate. Substrate is bound at residue 151–154 (DTTR). The beta-D-fructose 1,6-bisphosphate site is built by arginine 156 and histidine 171. Histidine 178 serves as the catalytic Proton acceptor. Tyrosine 223 carries the phosphotyrosine modification. Threonine 232 lines the substrate pocket.

This sequence belongs to the LDH/MDH superfamily. LDH family. Homotetramer.

The protein resides in the cytoplasm. It catalyses the reaction (S)-lactate + NAD(+) = pyruvate + NADH + H(+). The protein operates within fermentation; pyruvate fermentation to lactate; (S)-lactate from pyruvate: step 1/1. Allosterically activated by fructose 1,6-bisphosphate (FBP). In terms of biological role, catalyzes the conversion of lactate to pyruvate. This Lactococcus lactis subsp. lactis (strain IL1403) (Streptococcus lactis) protein is L-lactate dehydrogenase 2.